A 173-amino-acid polypeptide reads, in one-letter code: MSRRCTEVKRKSLPSNKYQSISAATPNQIMLASKLINKLTHHGNKELVEKMLDKIIQHIKHKYKADGFEVLESACNNVKPSLQVESLRIGGATYQVPSPVNELRSYTLAIKWIINSAANRTFEKSMWQKIAEELYEASNGRGGAVKKKDDNHKMAEANQAFSHLITKRRSRGN.

The protein belongs to the universal ribosomal protein uS7 family. As to quaternary structure, part of the 30S ribosomal subunit. Contacts proteins S9 and S11.

One of the primary rRNA binding proteins, it binds directly to 16S rRNA where it nucleates assembly of the head domain of the 30S subunit. Is located at the subunit interface close to the decoding center, probably blocks exit of the E-site tRNA. This is Small ribosomal subunit protein uS7 from Orientia tsutsugamushi (strain Boryong) (Rickettsia tsutsugamushi).